Here is a 1032-residue protein sequence, read N- to C-terminus: Suppression of tumorigenicity 18 protein (1032 aa).

3 disordered regions span residues Arg29–His76, Gly162–Asn213, and Arg325–Pro354. Basic residues predominate over residues Asn40–His51. The span at Tyr52–His76 shows a compositional bias: basic and acidic residues. 6 CCHHC-type zinc fingers span residues Pro344–Ile387, Leu388–Met431, Arg700–Leu743, Met744–Met787, Glu792–Asn835, and Lys845–Val888. Cys353, Cys358, His371, Cys377, Cys397, Cys402, His415, Cys421, Cys709, Cys714, His727, Cys733, Cys753, Cys758, His771, Cys777, Cys801, Cys806, His819, Cys825, Cys854, Cys859, His872, and Cys878 together coordinate Zn(2+). A coiled-coil region spans residues Ile905–Leu974.

Belongs to the MYT1 family. Detected in brain.

The protein resides in the nucleus. In terms of biological role, repressor that binds to DNA sequences containing a bipartite element consisting of a direct repeat of the sequence 5'-AAAGTTT-3' separated by 2-9 nucleotides. Represses basal transcription activity from target promoters. This Rattus norvegicus (Rat) protein is Suppression of tumorigenicity 18 protein (St18).